Reading from the N-terminus, the 461-residue chain is Nuclear distribution protein PAC1 (461 aa).

The LisH domain occupies 9–41 (QAEELHKSIIAYLTANNLLNTANTLRAELNLSE). WD repeat units follow at residues 114–155 (SHRD…RTIK), 157–197 (HTRA…KNIR), 201–248 (GHDH…CVRT), 251–290 (GHTA…PESK), 312–355 (QYLS…LMTL), 357–396 (GHDN…KCIK), and 401–457 (AHER…MKLR).

The protein belongs to the WD repeat LIS1/nudF family. In terms of assembly, self-associates. Interacts with NDL1 and dynein.

The protein localises to the cytoplasm. It localises to the cytoskeleton. Its subcellular location is the spindle pole. In terms of biological role, positively regulates the activity of the minus-end directed microtubule motor protein dynein. May enhance dynein-mediated microtubule sliding by targeting dynein to the microtubule plus end. Required for nuclear migration during vegetative growth as well as development. Required for retrograde early endosome (EE) transport from the hyphal tip. Required for localization of dynein to the mitotic spindle poles. Recruits additional proteins to the dynein complex at SPBs. The protein is Nuclear distribution protein PAC1 of Arthroderma otae (strain ATCC MYA-4605 / CBS 113480) (Microsporum canis).